Reading from the N-terminus, the 293-residue chain is Mitochondrial inner membrane protease atp23 (293 aa).

Positions Met1 to Asp51 are disordered. Over residues Ser8 to Pro22 the composition is skewed to low complexity. His190 is an a divalent metal cation binding site. Residue Glu191 is part of the active site. His194 serves as a coordination point for a divalent metal cation.

Belongs to the peptidase M76 family.

The protein resides in the mitochondrion inner membrane. In terms of biological role, has a dual role in the assembly of mitochondrial ATPase. Acts as a protease that removes N-terminal residues of mitochondrial ATPase CF(0) subunit 6 at the intermembrane space side. Also involved in the correct assembly of the membrane-embedded ATPase CF(0) particle, probably mediating association of subunit 6 with the subunit 9 ring. This chain is Mitochondrial inner membrane protease atp23 (atp23), found in Neurospora crassa (strain ATCC 24698 / 74-OR23-1A / CBS 708.71 / DSM 1257 / FGSC 987).